The sequence spans 547 residues: Chaperonin GroEL 1 (547 aa).

ATP contacts are provided by residues 30–33 (TLGP), lysine 51, 87–91 (DGTTT), glycine 415, and aspartate 496.

This sequence belongs to the chaperonin (HSP60) family. In terms of assembly, forms a cylinder of 14 subunits composed of two heptameric rings stacked back-to-back. Interacts with the co-chaperonin GroES.

It localises to the cytoplasm. It catalyses the reaction ATP + H2O + a folded polypeptide = ADP + phosphate + an unfolded polypeptide.. Functionally, together with its co-chaperonin GroES, plays an essential role in assisting protein folding. The GroEL-GroES system forms a nano-cage that allows encapsulation of the non-native substrate proteins and provides a physical environment optimized to promote and accelerate protein folding. This is Chaperonin GroEL 1 from Rhodopseudomonas palustris (strain BisA53).